The primary structure comprises 170 residues: Putative pre-16S rRNA nuclease (170 aa).

The protein belongs to the YqgF nuclease family.

It localises to the cytoplasm. Could be a nuclease involved in processing of the 5'-end of pre-16S rRNA. This Synechococcus sp. (strain JA-2-3B'a(2-13)) (Cyanobacteria bacterium Yellowstone B-Prime) protein is Putative pre-16S rRNA nuclease.